The primary structure comprises 114 residues: Large ribosomal subunit protein bL19 (114 aa).

It belongs to the bacterial ribosomal protein bL19 family.

Functionally, this protein is located at the 30S-50S ribosomal subunit interface and may play a role in the structure and function of the aminoacyl-tRNA binding site. The polypeptide is Large ribosomal subunit protein bL19 (Heliobacterium modesticaldum (strain ATCC 51547 / Ice1)).